A 542-amino-acid polypeptide reads, in one-letter code: Protein DETOXIFICATION 34 (542 aa).

Transmembrane regions (helical) follow at residues 97-117 (APIAFNILCNYGVNSFTSIFV), 127-147 (AVAIALSVVSNFSFGFLLGMA), 176-196 (ILLGTSVCLLPLYIYATPLLI), 204-224 (IAEISGKFTTQIIPQMFALAI), 240-260 (IMAWIGFFALTLHIFILYLFI), 272-292 (AAFDVSAWGIAIAQVVYVVGW), 316-336 (FASAVMLCLEIWYFMTIIVLT), 344-364 (IAVGSLSICMNINGWEGMLFI), 390-410 (VIVTVIESLVIGVVCAIVILI), 435-455 (LLGITMILNSLQPVISGVAVG), 462-482 (VAYINLFCYYAFGLPLGFLLG), and 491-511 (GIWIGMICGTSLQTLILLYMI).

It belongs to the multi antimicrobial extrusion (MATE) (TC 2.A.66.1) family.

The protein localises to the membrane. The polypeptide is Protein DETOXIFICATION 34 (Arabidopsis thaliana (Mouse-ear cress)).